Reading from the N-terminus, the 220-residue chain is Probable septum site-determining protein MinC (220 aa).

Belongs to the MinC family. In terms of assembly, interacts with MinD and FtsZ.

Functionally, cell division inhibitor that blocks the formation of polar Z ring septums. Rapidly oscillates between the poles of the cell to destabilize FtsZ filaments that have formed before they mature into polar Z rings. Prevents FtsZ polymerization. The protein is Probable septum site-determining protein MinC of Vibrio atlanticus (strain LGP32) (Vibrio splendidus (strain Mel32)).